We begin with the raw amino-acid sequence, 358 residues long: DNA replication and repair protein RecF (358 aa).

30 to 37 (GANGSGKT) is a binding site for ATP.

The protein belongs to the RecF family.

It localises to the cytoplasm. Its function is as follows. The RecF protein is involved in DNA metabolism; it is required for DNA replication and normal SOS inducibility. RecF binds preferentially to single-stranded, linear DNA. It also seems to bind ATP. The protein is DNA replication and repair protein RecF of Acinetobacter baylyi (strain ATCC 33305 / BD413 / ADP1).